The sequence spans 127 residues: Apolipoprotein C-IV (127 aa).

Positions 1-27 are cleaved as a signal peptide; that stretch reads MSLLRNRLQDLPALCLCVLVLACIGAC.

The protein belongs to the apolipoprotein C4 family.

The protein resides in the secreted. May participate in lipoprotein metabolism. This is Apolipoprotein C-IV (APOC4) from Chlorocebus sabaeus (Green monkey).